Reading from the N-terminus, the 630-residue chain is Molybdenum cofactor biosynthesis protein 1 (630 aa).

A Radical SAM core domain is found at Arg-61 to Lys-298. Arg-70 provides a ligand contact to GTP. Positions 77 and 81 each coordinate [4Fe-4S] cluster. Position 83 (Tyr-83) interacts with S-adenosyl-L-methionine. Residue Cys-84 participates in [4Fe-4S] cluster binding. GTP is bound at residue Arg-120. Gly-124 provides a ligand contact to S-adenosyl-L-methionine. Position 151 (Thr-151) interacts with GTP. Ser-175 contributes to the S-adenosyl-L-methionine binding site. Lys-212 contributes to the GTP binding site. Position 246 (Met-246) interacts with S-adenosyl-L-methionine. Cys-312 and Cys-315 together coordinate [4Fe-4S] cluster. Arg-317–Arg-319 serves as a coordination point for GTP. Residue Cys-329 participates in [4Fe-4S] cluster binding. The interval Lys-402 to Thr-629 is molybdenum cofactor biosynthesis protein C. Asp-599 functions as the For molybdenum cofactor biosynthesis protein C activity in the catalytic mechanism.

This sequence in the C-terminal section; belongs to the MoaC family. The protein in the N-terminal section; belongs to the radical SAM superfamily. MoaA family. As to quaternary structure, isoform mocs1a and isoform mocs1b probably form a heterooligomer. [4Fe-4S] cluster is required as a cofactor.

The catalysed reaction is GTP + AH2 + S-adenosyl-L-methionine = (8S)-3',8-cyclo-7,8-dihydroguanosine 5'-triphosphate + 5'-deoxyadenosine + L-methionine + A + H(+). It carries out the reaction (8S)-3',8-cyclo-7,8-dihydroguanosine 5'-triphosphate = cyclic pyranopterin phosphate + diphosphate. The protein operates within cofactor biosynthesis; molybdopterin biosynthesis. Isoform mocs1a and isoform mocs1b probably form a complex that catalyzes the conversion of 5'-GTP to cyclic pyranopterin monophosphate (cPMP). mocs1a catalyzes the cyclization of GTP to (8S)-3',8-cyclo-7,8-dihydroguanosine 5'-triphosphate and mocs1b catalyzes the subsequent conversion of (8S)-3',8-cyclo-7,8-dihydroguanosine 5'-triphosphate to cPMP. In Dictyostelium discoideum (Social amoeba), this protein is Molybdenum cofactor biosynthesis protein 1 (mocs1).